The following is a 497-amino-acid chain: Serine hydroxymethyltransferase (497 aa).

(6S)-5,6,7,8-tetrahydrofolate is bound by residues L176 and 180–182 (GHL). N6-(pyridoxal phosphate)lysine is present on K289.

Belongs to the SHMT family. In terms of assembly, homodimer. It depends on pyridoxal 5'-phosphate as a cofactor.

It localises to the cytoplasm. The catalysed reaction is (6R)-5,10-methylene-5,6,7,8-tetrahydrofolate + glycine + H2O = (6S)-5,6,7,8-tetrahydrofolate + L-serine. It functions in the pathway one-carbon metabolism; tetrahydrofolate interconversion. It participates in amino-acid biosynthesis; glycine biosynthesis; glycine from L-serine: step 1/1. Functionally, catalyzes the reversible interconversion of serine and glycine with tetrahydrofolate (THF) serving as the one-carbon carrier. This reaction serves as the major source of one-carbon groups required for the biosynthesis of purines, thymidylate, methionine, and other important biomolecules. Also exhibits THF-independent aldolase activity toward beta-hydroxyamino acids, producing glycine and aldehydes, via a retro-aldol mechanism. This is Serine hydroxymethyltransferase from Chlamydia felis (strain Fe/C-56) (Chlamydophila felis).